We begin with the raw amino-acid sequence, 212 residues long: uncharacterized protein (212 aa).

This sequence belongs to the flavoredoxin family. FMN is required as a cofactor.

This is an uncharacterized protein from Methanothermobacter thermautotrophicus (strain ATCC 29096 / DSM 1053 / JCM 10044 / NBRC 100330 / Delta H) (Methanobacterium thermoautotrophicum).